We begin with the raw amino-acid sequence, 635 residues long: Probable ethylene response sensor 2 (635 aa).

3 consecutive transmembrane segments (helical) span residues 24-44 (ISDF…IYFV), 59-79 (FGAF…TFAI), and 94-114 (ATAV…PDLL). Residues cysteine 66 and histidine 70 each coordinate Cu cation. A GAF domain is found at 159-308 (DRHTILRTTL…VVADQVAVAL (150 aa)). Positions 351 to 589 (VMNHEMRTPM…MFFVKLGMPE (239 aa)) constitute a Histidine kinase domain. Phosphohistidine; by autocatalysis is present on histidine 354.

This sequence belongs to the ethylene receptor family. Homodimer. Cu cation is required as a cofactor.

It localises to the endoplasmic reticulum membrane. It catalyses the reaction ATP + protein L-histidine = ADP + protein N-phospho-L-histidine.. Functionally, ethylene receptor related to bacterial two-component regulators. Acts as a negative regulator of ethylene signaling. May play a role in the regulation of flowering by up-regulating GI (GIGANTEA) and RCN1 and regulate starch accumulation by down-regulating the alpha-amylase AMY3D. The protein is Probable ethylene response sensor 2 (ERS2) of Oryza sativa subsp. japonica (Rice).